The following is a 468-amino-acid chain: Siroheme synthase (468 aa).

A precorrin-2 dehydrogenase /sirohydrochlorin ferrochelatase region spans residues 1-202; sequence MDYLPLFARL…EQHDSAEQWM (202 aa). NAD(+) contacts are provided by residues 22–23 and 43–44; these read DI and PS. A Phosphoserine modification is found at Ser-126. Positions 214 to 468 are uroporphyrinogen-III C-methyltransferase; sequence GEIVLVGAGP…SGKEHLINLA (255 aa). Position 223 (Pro-223) interacts with S-adenosyl-L-methionine. Asp-246 (proton acceptor) is an active-site residue. The active-site Proton donor is the Lys-268. Residues 299-301, 329-330, Met-381, and Gly-410 contribute to the S-adenosyl-L-methionine site; these read GGD and TA.

The protein in the N-terminal section; belongs to the precorrin-2 dehydrogenase / sirohydrochlorin ferrochelatase family. In the C-terminal section; belongs to the precorrin methyltransferase family.

It carries out the reaction uroporphyrinogen III + 2 S-adenosyl-L-methionine = precorrin-2 + 2 S-adenosyl-L-homocysteine + H(+). The enzyme catalyses precorrin-2 + NAD(+) = sirohydrochlorin + NADH + 2 H(+). It catalyses the reaction siroheme + 2 H(+) = sirohydrochlorin + Fe(2+). Its pathway is cofactor biosynthesis; adenosylcobalamin biosynthesis; precorrin-2 from uroporphyrinogen III: step 1/1. It participates in cofactor biosynthesis; adenosylcobalamin biosynthesis; sirohydrochlorin from precorrin-2: step 1/1. It functions in the pathway porphyrin-containing compound metabolism; siroheme biosynthesis; precorrin-2 from uroporphyrinogen III: step 1/1. The protein operates within porphyrin-containing compound metabolism; siroheme biosynthesis; siroheme from sirohydrochlorin: step 1/1. Its pathway is porphyrin-containing compound metabolism; siroheme biosynthesis; sirohydrochlorin from precorrin-2: step 1/1. Multifunctional enzyme that catalyzes the SAM-dependent methylations of uroporphyrinogen III at position C-2 and C-7 to form precorrin-2 via precorrin-1. Then it catalyzes the NAD-dependent ring dehydrogenation of precorrin-2 to yield sirohydrochlorin. Finally, it catalyzes the ferrochelation of sirohydrochlorin to yield siroheme. This is Siroheme synthase from Tolumonas auensis (strain DSM 9187 / NBRC 110442 / TA 4).